We begin with the raw amino-acid sequence, 188 residues long: GTP cyclohydrolase 1 (188 aa).

Residues cysteine 75, histidine 78, and cysteine 146 each coordinate Zn(2+).

This sequence belongs to the GTP cyclohydrolase I family. As to quaternary structure, toroid-shaped homodecamer, composed of two pentamers of five dimers.

It carries out the reaction GTP + H2O = 7,8-dihydroneopterin 3'-triphosphate + formate + H(+). It functions in the pathway cofactor biosynthesis; 7,8-dihydroneopterin triphosphate biosynthesis; 7,8-dihydroneopterin triphosphate from GTP: step 1/1. The polypeptide is GTP cyclohydrolase 1 (Hahella chejuensis (strain KCTC 2396)).